Consider the following 148-residue polypeptide: DNA-directed RNA polymerase II subunit GRINL1A, isoforms 4/5 (148 aa).

The disordered stretch occupies residues 1 to 66; it reads MATPARAPES…AEFGGAAGNV (66 aa). Low complexity predominate over residues 53–66; it reads GLGAAEFGGAAGNV.

The chain is DNA-directed RNA polymerase II subunit GRINL1A, isoforms 4/5 (POLR2M) from Homo sapiens (Human).